We begin with the raw amino-acid sequence, 529 residues long: Glucose transporter 2A (529 aa).

The segment at 1–22 (MTERRDNVSHAPDAIEGPNDGA) is disordered. The Cytoplasmic segment spans residues 1–43 (MTERRDNVSHAPDAIEGPNDGAHAEDTSPGFFSFENLGVAQVQ). A helical transmembrane segment spans residues 44 to 64 (VVGGTLNGFSIGFVAVYILLY). Topologically, residues 65-119 (EVATNCSLFKTTEACKAVGSYGCEWKDTEVCSWKKECDSDSDGVNPCESLIGYSS) are extracellular. A helical transmembrane segment spans residues 120 to 140 (LYSGIFASAMIVGSMVGSIIA). Residues 141–152 (GKCITMFGLKKS) lie on the Cytoplasmic side of the membrane. The helical transmembrane segment at 153–173 (FIIVGVMSVVASALNHISVAT) threads the bilayer. The Extracellular portion of the chain corresponds to 174 to 175 (NE). Residues 176–196 (FWVLCAGRVLMGIGLGVVCVI) form a helical membrane-spanning segment. The Cytoplasmic portion of the chain corresponds to 197 to 214 (CPMYVNENAHPKLSKVDG). The chain crosses the membrane as a helical span at residues 215 to 235 (VLFQVFITFGIMLAAMLGLIL). Over 236–250 (DKTVNYDNDPDMAGR) the chain is Extracellular. Residues 251 to 271 (FHGFCAVSSVLSVAMFLVGMF) traverse the membrane as a helical segment. At 272–300 (LRESTATFSQDDDGKADGGMDPNEYGWGQ) the chain is on the cytoplasmic side. A helical transmembrane segment spans residues 301–321 (MLWPLFMGAVTAGTLQLTGIN). Residues 322–339 (AVMNYAPKITENLGMDPS) are Extracellular-facing. Residues 340-360 (LGNFLVMAWNFVTSLVAIPLA) traverse the membrane as a helical segment. The Cytoplasmic segment spans residues 361 to 368 (SRFTMRQM). Residues 369-389 (FITCSFVASCMCLFLCGIPVF) form a helical membrane-spanning segment. Topologically, residues 390–404 (PGVAEEKVKNGVATT) are extracellular. The chain crosses the membrane as a helical span at residues 405–425 (GIALFIAAFEFGVGSCFFVLA). Residues 426 to 439 (QDLFPPSFRPKGSS) lie on the Cytoplasmic side of the membrane. The helical transmembrane segment at 440–460 (FVVMMQFIFNILINLLYPITT) threads the bilayer. At 461–476 (EAISGGATGDQDKGQA) the chain is on the extracellular side. Residues 477 to 497 (VVFILFGLIGLICFVLQFFYL) traverse the membrane as a helical segment. Topologically, residues 498–529 (YPYDANQDHENDHGTEPVERILSPVDVPTPRN) are cytoplasmic. The segment at 508–529 (NDHGTEPVERILSPVDVPTPRN) is disordered.

This sequence belongs to the major facilitator superfamily. Sugar transporter (TC 2.A.1.1) family.

It is found in the membrane. In terms of biological role, facilitative glucose transporter. In Trypanosoma brucei brucei, this protein is Glucose transporter 2A (THT2A).